The primary structure comprises 72 residues: MKLCVTFLLILVILPSVTGEKSSKRTLSGAALRGDWGMCSGIGQGCGQDSNCCGDMCCYGQICAMTFAACGP.

The signal sequence occupies residues 1–19; sequence MKLCVTFLLILVILPSVTG. A propeptide spanning residues 20-32 is cleaved from the precursor; sequence EKSSKRTLSGAAL. 4 disulfides stabilise this stretch: cysteine 39/cysteine 53, cysteine 46/cysteine 58, cysteine 52/cysteine 63, and cysteine 57/cysteine 70.

This sequence belongs to the conotoxin I1 superfamily. Expressed by the venom duct.

Its subcellular location is the secreted. The sequence is that of Conotoxin Ep11.1 from Conus episcopatus (Bishop's cone).